The chain runs to 359 residues: 3-dehydroquinate synthase (359 aa).

NAD(+)-binding positions include 71 to 76, 105 to 109, 129 to 130, lysine 142, and lysine 151; these read DGEAYK, GVVGD, and TT. 3 residues coordinate Zn(2+): glutamate 184, histidine 247, and histidine 264.

This sequence belongs to the sugar phosphate cyclases superfamily. Dehydroquinate synthase family. Requires Co(2+) as cofactor. Zn(2+) serves as cofactor. It depends on NAD(+) as a cofactor.

The protein localises to the cytoplasm. The enzyme catalyses 7-phospho-2-dehydro-3-deoxy-D-arabino-heptonate = 3-dehydroquinate + phosphate. It functions in the pathway metabolic intermediate biosynthesis; chorismate biosynthesis; chorismate from D-erythrose 4-phosphate and phosphoenolpyruvate: step 2/7. Functionally, catalyzes the conversion of 3-deoxy-D-arabino-heptulosonate 7-phosphate (DAHP) to dehydroquinate (DHQ). This is 3-dehydroquinate synthase from Burkholderia cenocepacia (strain ATCC BAA-245 / DSM 16553 / LMG 16656 / NCTC 13227 / J2315 / CF5610) (Burkholderia cepacia (strain J2315)).